The chain runs to 845 residues: Beta-mannosidase B (845 aa).

N-linked (GlcNAc...) asparagine glycosylation occurs at asparagine 252. Catalysis depends on glutamate 432, which acts as the Proton donor. N-linked (GlcNAc...) asparagine glycans are attached at residues asparagine 717 and asparagine 723.

Belongs to the glycosyl hydrolase 2 family. Beta-mannosidase B subfamily.

The catalysed reaction is Hydrolysis of terminal, non-reducing beta-D-mannose residues in beta-D-mannosides.. Its pathway is glycan metabolism; N-glycan degradation. Exoglycosidase that cleaves the single beta-linked mannose residue from the non-reducing end of beta-mannosidic oligosaccharides of various complexity and length. Prefers mannobiose over mannotriose and has no activity against polymeric mannan. Is also severely restricted by galactosyl substitutions at the +1 subsite. The polypeptide is Beta-mannosidase B (mndB) (Aspergillus fumigatus (strain CBS 144.89 / FGSC A1163 / CEA10) (Neosartorya fumigata)).